We begin with the raw amino-acid sequence, 158 residues long: Crossover junction endodeoxyribonuclease RuvC (158 aa).

Catalysis depends on residues aspartate 7, glutamate 66, and aspartate 139. Residues aspartate 7, glutamate 66, and aspartate 139 each coordinate Mg(2+).

Belongs to the RuvC family. In terms of assembly, homodimer which binds Holliday junction (HJ) DNA. The HJ becomes 2-fold symmetrical on binding to RuvC with unstacked arms; it has a different conformation from HJ DNA in complex with RuvA. In the full resolvosome a probable DNA-RuvA(4)-RuvB(12)-RuvC(2) complex forms which resolves the HJ. Requires Mg(2+) as cofactor.

It is found in the cytoplasm. The enzyme catalyses Endonucleolytic cleavage at a junction such as a reciprocal single-stranded crossover between two homologous DNA duplexes (Holliday junction).. Functionally, the RuvA-RuvB-RuvC complex processes Holliday junction (HJ) DNA during genetic recombination and DNA repair. Endonuclease that resolves HJ intermediates. Cleaves cruciform DNA by making single-stranded nicks across the HJ at symmetrical positions within the homologous arms, yielding a 5'-phosphate and a 3'-hydroxyl group; requires a central core of homology in the junction. The consensus cleavage sequence is 5'-(A/T)TT(C/G)-3'. Cleavage occurs on the 3'-side of the TT dinucleotide at the point of strand exchange. HJ branch migration catalyzed by RuvA-RuvB allows RuvC to scan DNA until it finds its consensus sequence, where it cleaves and resolves the cruciform DNA. In Carboxydothermus hydrogenoformans (strain ATCC BAA-161 / DSM 6008 / Z-2901), this protein is Crossover junction endodeoxyribonuclease RuvC.